The sequence spans 344 residues: Follistatin (344 aa).

The first 29 residues, 1–29 (MARPRHQPGGLCLLLLLLCQFMEDRSAQA), serve as a signal peptide directing secretion. Positions 30–103 (GNCWLRQAKN…TCENVDCGPG (74 aa)) constitute a TB domain. 18 disulfide bridges follow: Cys-32–Cys-55, Cys-42–Cys-88, Cys-56–Cys-91, Cys-95–Cys-106, Cys-100–Cys-116, Cys-118–Cys-150, Cys-122–Cys-143, Cys-132–Cys-164, Cys-168–Cys-179, Cys-173–Cys-189, Cys-192–Cys-225, Cys-196–Cys-218, Cys-207–Cys-239, Cys-245–Cys-256, Cys-250–Cys-267, Cys-270–Cys-302, Cys-274–Cys-295, and Cys-284–Cys-316. The region spanning 94 to 117 (TCENVDCGPGKKCRMNKKNKPRCV) is the Follistatin-like 1 domain. Residues 112 to 166 (NKPRCVCAPDCSNITWKGLVCGLDGKTYRNECALLKARCKEQPELQVQYQGKCKK) enclose the Kazal-like 1 domain. Asn-124 is a glycosylation site (N-linked (GlcNAc...) asparagine). Positions 167–190 (TCRDVFCPGSSTCVVDQTNNAYCV) constitute a Follistatin-like 2 domain. A Kazal-like 2 domain is found at 186–241 (NAYCVTCNRICPEPTSSEQYLCGNDGVTYPSACHLRKATCLLGRSIGLAYEGKCIK). A Follistatin-like 3 domain is found at 244–268 (SCDDIQCTGGKKCLWDFKVGRGRCS). One can recognise a Kazal-like 3 domain in the interval 261 to 318 (KVGRGRCSLCGELCPESKSEEPVCASDNATYASECAMKEAACSSGVLLEVKHSGSCNS). N-linked (GlcNAc...) asparagine glycosylation is present at Asn-288. A disordered region spans residues 316–344 (CNSISEDTEDEEEDEDQDYSFPISSILEW). Acidic residues predominate over residues 321 to 333 (EDTEDEEEDEDQD).

As to quaternary structure, monomer.

It localises to the secreted. Functionally, binds directly to activin and functions as an activin antagonist. Specific inhibitor of the biosynthesis and secretion of pituitary follicle stimulating hormone (FSH). This is Follistatin from Bubalus bubalis (Domestic water buffalo).